The sequence spans 446 residues: tRNA modification GTPase MnmE (446 aa).

(6S)-5-formyl-5,6,7,8-tetrahydrofolate-binding residues include arginine 24, glutamate 81, and lysine 120. In terms of domain architecture, TrmE-type G spans 216–368; the sequence is GLHAVLIGPP…LHIRLRELAL (153 aa). Asparagine 226 provides a ligand contact to K(+). GTP-binding positions include 226-231, 245-251, and 270-273; these read NAGKSS, TDVAGTT, and DTAG. Serine 230 provides a ligand contact to Mg(2+). Residues threonine 245, valine 247, and threonine 250 each contribute to the K(+) site. Threonine 251 contacts Mg(2+). Lysine 446 contributes to the (6S)-5-formyl-5,6,7,8-tetrahydrofolate binding site.

This sequence belongs to the TRAFAC class TrmE-Era-EngA-EngB-Septin-like GTPase superfamily. TrmE GTPase family. As to quaternary structure, homodimer. Heterotetramer of two MnmE and two MnmG subunits. K(+) serves as cofactor.

The protein localises to the cytoplasm. In terms of biological role, exhibits a very high intrinsic GTPase hydrolysis rate. Involved in the addition of a carboxymethylaminomethyl (cmnm) group at the wobble position (U34) of certain tRNAs, forming tRNA-cmnm(5)s(2)U34. This chain is tRNA modification GTPase MnmE, found in Xanthomonas oryzae pv. oryzae (strain MAFF 311018).